The sequence spans 96 residues: Small ribosomal subunit protein bS6 (96 aa).

The protein belongs to the bacterial ribosomal protein bS6 family.

In terms of biological role, binds together with bS18 to 16S ribosomal RNA. The protein is Small ribosomal subunit protein bS6 of Streptococcus sanguinis (strain SK36).